A 162-amino-acid polypeptide reads, in one-letter code: Crossover junction endodeoxyribonuclease RuvC (162 aa).

Residues aspartate 8, glutamate 69, and histidine 141 contribute to the active site. 3 residues coordinate Mg(2+): aspartate 8, glutamate 69, and histidine 141.

This sequence belongs to the RuvC family. Homodimer which binds Holliday junction (HJ) DNA. The HJ becomes 2-fold symmetrical on binding to RuvC with unstacked arms; it has a different conformation from HJ DNA in complex with RuvA. In the full resolvosome a probable DNA-RuvA(4)-RuvB(12)-RuvC(2) complex forms which resolves the HJ. Requires Mg(2+) as cofactor.

The protein resides in the cytoplasm. The catalysed reaction is Endonucleolytic cleavage at a junction such as a reciprocal single-stranded crossover between two homologous DNA duplexes (Holliday junction).. Functionally, the RuvA-RuvB-RuvC complex processes Holliday junction (HJ) DNA during genetic recombination and DNA repair. Endonuclease that resolves HJ intermediates. Cleaves cruciform DNA by making single-stranded nicks across the HJ at symmetrical positions within the homologous arms, yielding a 5'-phosphate and a 3'-hydroxyl group; requires a central core of homology in the junction. The consensus cleavage sequence is 5'-(A/T)TT(C/G)-3'. Cleavage occurs on the 3'-side of the TT dinucleotide at the point of strand exchange. HJ branch migration catalyzed by RuvA-RuvB allows RuvC to scan DNA until it finds its consensus sequence, where it cleaves and resolves the cruciform DNA. The polypeptide is Crossover junction endodeoxyribonuclease RuvC (Wolbachia pipientis wMel).